Consider the following 228-residue polypeptide: UPF0758 protein MW1604 (228 aa).

The region spanning 102–224 (KITQPSDVAD…FTSLVEAGYF (123 aa)) is the MPN domain. Residues His173, His175, and Asp186 each coordinate Zn(2+). A JAMM motif motif is present at residues 173 to 186 (HNHPSGDVTPSQED).

This sequence belongs to the UPF0758 family.

This Staphylococcus aureus (strain MW2) protein is UPF0758 protein MW1604.